The primary structure comprises 217 residues: Octanoyltransferase (217 aa).

Positions 32–207 constitute a BPL/LPL catalytic domain; it reads SDSPDELWIV…TLSQLLGYQQ (176 aa). Substrate-binding positions include 71 to 78, 138 to 140, and 151 to 153; these read RGGQVTYH, SLG, and GLA. Catalysis depends on cysteine 169, which acts as the Acyl-thioester intermediate.

Belongs to the LipB family.

The protein resides in the cytoplasm. The catalysed reaction is octanoyl-[ACP] + L-lysyl-[protein] = N(6)-octanoyl-L-lysyl-[protein] + holo-[ACP] + H(+). It functions in the pathway protein modification; protein lipoylation via endogenous pathway; protein N(6)-(lipoyl)lysine from octanoyl-[acyl-carrier-protein]: step 1/2. In terms of biological role, catalyzes the transfer of endogenously produced octanoic acid from octanoyl-acyl-carrier-protein onto the lipoyl domains of lipoate-dependent enzymes. Lipoyl-ACP can also act as a substrate although octanoyl-ACP is likely to be the physiological substrate. This is Octanoyltransferase from Shewanella sp. (strain ANA-3).